The sequence spans 5588 residues: Histone-lysine N-methyltransferase 2D (5588 aa).

The tract at residues 1-61 is disordered; sequence MDSQKPPAED…QKPPHDCSRG (61 aa). The segment at 104–149 adopts a C2HC pre-PHD-type 1; degenerate zinc-finger fold; it reads GPCEAVLPKEDASQIGFPEGLTPAHLGEPGGHCWAHHWCAAWSAGV. PHD-type zinc fingers lie at residues 170 to 218 and 270 to 323; these read QRCS…PEHS and CPEC…CRLC. A PHD-type 2; degenerate zinc finger spans residues 226–276; sequence EARCAVCEGPGQLCDLLFCTSCGHHYHGACLDTALTARKRASWQCPECKVC. The RING-type 1; atypical zinc finger occupies 229-274; the sequence is CAVCEGPGQLCDLLFCTSCGHHYHGACLDTALTARKRASWQCPECK. The RING-type 2; degenerate zinc finger occupies 276–321; that stretch reads CQSCRKPGNDSKMLVCETCDKGYHTFCLKPPMEDLPAHSWKCKTCR. Disordered stretches follow at residues 438–908 and 922–1315; these read MPLL…SPII and LEYP…DDDT. The segment at 439–642 is 15 X 5 AA repeats of S/P-P-P-E/P-E/A; sequence PLLPPPEESP…VSRLSPPPEE (204 aa). Over residues 440–463 the composition is skewed to pro residues; that stretch reads LLPPPEESPLSPPPEESPTSPPPE. Tandem repeats lie at residues 442-446, 460-464, 469-473, and 477-481. A compositionally biased stretch (low complexity) spans 464 to 475; that stretch reads ASRLSPPTEESP. Pro residues-rich tracts occupy residues 490–512 and 519–560; these read GCPPSPALDTPLSPPPEASPLSP and LSPP…PPPE. 4 repeat units span residues 520 to 524, 529 to 533, 538 to 542, and 547 to 551. The span at 561 to 572 shows a compositional bias: low complexity; the sequence is ASRLFPPFEESP. A compositionally biased stretch (pro residues) spans 573 to 614; the sequence is LSPPPEDSPLSPPPEASRLSPPPEDSPMSPPPEDSPMSPPPE. Repeat copies occupy residues 574 to 578, 583 to 587, 592 to 596, and 610 to 614. A compositionally biased stretch (low complexity) spans 619-636; the sequence is LPLPVLSHLSPLPEVSRL. Repeat unit 15 spans residues 637 to 641; the sequence is SPPPE. The segment covering 637–677 has biased composition (pro residues); that stretch reads SPPPEESPLSPPPEDSPASPPPEASRLSPPPEDSPASPPPE. Low complexity predominate over residues 696–712; the sequence is DSLVSLPMEESPLSPLP. S727 carries the phosphoserine modification. Low complexity-rich tracts occupy residues 735–755, 836–851, and 876–893; these read LCPQPEELPLSPQSEEPCLSP, PSQSSAPKELSLFSPS, and LPEELPLSLSGEPVLSPQ. Composition is skewed to pro residues over residues 894–908, 959–973, and 985–1012; these read LMPPDPLPPPLSPII, EPVPPMILPPSPGSP, and LPPPCSPLLPHSLPPPTPPPSHCSPPAL. Residues 1013 to 1023 are compositionally biased toward low complexity; sequence PLSVPSPLSPV. Basic and acidic residues predominate over residues 1033-1045; it reads AELHEMETDKGPE. 3 consecutive PHD-type zinc fingers follow at residues 1071-1124, 1121-1171, and 1198-1253; these read PSPA…PMEV, PMEV…SQGD, and LGVS…SPAR. Position 1107 is a phosphoserine (S1107). Residues 1163–1172 show a composition bias toward polar residues; the sequence is EISNLSQGDA. The segment at 1201 to 1251 adopts an RING-type 3; atypical zinc-finger fold; sequence STDVSPARDEGSLRLCTDSLPETDDSLLCDTGTATSGGKAEGDKGRRRSSP. S1205 carries the post-translational modification Phosphoserine. T1223 bears the Phosphothreonine mark. Residue S1226 is modified to Phosphoserine. Residues 1245 to 1258 are compositionally biased toward basic residues; that stretch reads GRRRSSPARSRIKQ. Phosphoserine is present on S1562. 4 disordered regions span residues 1566–1721, 1751–1846, 1886–1962, and 2095–2641; these read KRRQ…SKLE, GRPG…MESK, GLAL…SLQR, and SADG…QRQR. Positions 1593 to 1608 are enriched in basic and acidic residues; the sequence is PDDKKDGDLDTDDLLK. Residue S1627 is modified to Phosphoserine. Positions 1631–1641 are enriched in basic and acidic residues; it reads ELGKEETEESK. 2 stretches are compositionally biased toward basic residues: residues 1658–1668 and 1709–1718; these read RQRKSHTRVKR and KQQRRARKKS. Basic and acidic residues predominate over residues 1762-1782; that stretch reads PRADGGSDRKELMTAMHKGDD. Phosphoserine is present on S1791. T1822 is modified (phosphothreonine). Residues 1831 to 1846 show a composition bias toward basic and acidic residues; the sequence is DLDRIPTEELPKMESK. Composition is skewed to low complexity over residues 1886–1896 and 1936–1947; these read GLALGSLPSSS and TTPSTPTTPTTE. Residues 2151–2166 show a composition bias toward pro residues; the sequence is PTYPPYPSPTGAPAQP. Over residues 2170 to 2181 the composition is skewed to low complexity; it reads GTTTRPGTGQPG. S2196 bears the Phosphoserine mark. Phosphothreonine is present on T2197. N6-acetyllysine is present on K2203. A phosphoserine mark is found at S2217 and S2231. Residues 2237-2249 are compositionally biased toward basic and acidic residues; it reads ESRKSLEVKKEEL. A phosphoserine mark is found at S2266, S2268, and S2299. Composition is skewed to pro residues over residues 2308–2322 and 2331–2359; these read EPPPAQALAPSPPSH and YPDPYAQPPLTPRPQPPPPESCCAPPPRS. The segment covering 2366–2388 has biased composition (low complexity); it reads SRVPASPQSQSSSQSPLTPRPLS. Residues 2470–2486 show a composition bias toward polar residues; sequence GQPTNFARSPGTGTFVG. Position 2492 is an asymmetric dimethylarginine (R2492). Residues 2504 to 2514 are compositionally biased toward pro residues; that stretch reads LKPPVPQPGLP. Residues 2546-2557 show a composition bias toward low complexity; sequence PSGSPLGPNSGP. S2597 carries the phosphoserine modification. The segment covering 2610–2622 has biased composition (low complexity); that stretch reads SSSSLATPELSSA. Positions 2627–2665 form a coiled coil; sequence ISSLSQTELEKQRQRQRLRELLIRQQIQRNTLRQEKETA. An LXXLL motif 1 motif is present at residues 2644–2648; it reads LRELL. Residues 2655–2806 form a disordered region; the sequence is RNTLRQEKET…QLWQQQQQQQ (152 aa). Positions 2665–2680 are enriched in low complexity; that stretch reads AAAAAGAVGPPGNWGA. Polar residues-rich tracts occupy residues 2691–2704 and 2739–2748; these read SRGQTPFTGSQDRS and PSSMDMNSRQ. Positions 2768 to 2813 form a coiled coil; sequence LQQQQQQQQQQQQQQQQQQQQQQQQQQQQQLWQQQQQQQQQQQQQA. Over residues 2769–2806 the composition is skewed to low complexity; it reads QQQQQQQQQQQQQQQQQQQQQQQQQQQQQLWQQQQQQQ. At R2829 the chain carries Asymmetric dimethylarginine. The short motif at 3030-3034 is the LXXLL motif 2 element; sequence LDDLL. The tract at residues 3069-3104 is disordered; that stretch reads NEKAEREALLRGVEPVSLGPEERPPPAPDNSEPRLT. At K3071 the chain carries N6-acetyllysine. 2 positions are modified to phosphoserine: S3122 and S3193. Disordered stretches follow at residues 3129–3193 and 3271–3326; these read NTPK…LNPS and QQQQ…QSMV. Positions 3271–3284 are enriched in low complexity; it reads QQQQQQQQQQQQQQ. N6-acetyllysine is present on K3430. Disordered stretches follow at residues 3460 to 3496, 3593 to 3617, 3633 to 3661, and 3678 to 3704; these read SGGSGSDLQNHVAPGSGQERNAGDPAQPRPNPPTFAQ, RNKQQQQQQQQQQQQQQQHSAVLAV, LLPAHGLQPPQAPPGGQAGGLRLPPGGMV, and QQQQQHSGVAGSLTGPPGSFFPGNLAL. The stretch at 3559-3613 forms a coiled coil; the sequence is EKLKLVTEQQSKIQKQLDQVRKQQKEHTNLMAEYRNKQQQQQQQQQQQQQQQHSA. Residues 3596-3610 show a composition bias toward low complexity; sequence QQQQQQQQQQQQQQQ. Residues 3712–3747 adopt a coiled-coil conformation; the sequence is RLLQERQLQLQQQRMQLAQKLQQQQQQQQQQQQQQH. R3725 bears the Asymmetric dimethylarginine mark. Disordered stretches follow at residues 3760-3780 and 3808-3827; these read PGVQNQALGPKPQGLLPPSNH and LQQQQQQQQHSGALGPQGPH. Coiled-coil stretches lie at residues 3854-3883 and 3912-4052; these read RLLTAQQQQQQQQQQQQQQQQQQQQQQQQQ and SLQQ…QVTL. Residues 4053 to 4249 form a disordered region; sequence GPGLPVKPLQ…QGPPGAGVMP (197 aa). 3 stretches are compositionally biased toward low complexity: residues 4128 to 4159, 4172 to 4183, and 4226 to 4240; these read SQLLLVQSQAQSQATSVQLQPPLRLPGQPQPQ, GQQLGSGSSSES, and GSQPPKSGPAPQSGQ. R4255 is subject to Asymmetric dimethylarginine. The residue at position 4272 (S4272) is a Phosphoserine. Positions 4279 to 4283 match the LXXLL motif 3 motif; it reads LQALL. The disordered stretch occupies residues 4290–4452; sequence QSQAVRQTPP…SSLVPGHLDQ (163 aa). The segment covering 4294–4305 has biased composition (polar residues); it reads VRQTPPFQEPGT. A compositionally biased stretch (low complexity) spans 4307-4322; that stretch reads PSPLQGLLGCQPQPGG. The short motif at 4310 to 4314 is the LXXLL motif 4 element; that stretch reads LQGLL. Over residues 4379-4391 the composition is skewed to polar residues; that stretch reads QLPSPSAQLTPTH. S4410 bears the Phosphoserine mark. The span at 4432–4445 shows a compositional bias: polar residues; that stretch reads DNLTEAQKPEQSSL. An LXXLL motif 5 motif is present at residues 4514–4518; sequence LQKLL. K4516 bears the N6-acetyllysine mark. Disordered stretches follow at residues 4553-4596, 4664-4716, and 4729-4778; these read LQGT…EDGV, KNNL…EGAL, and AALP…QLGS. Over residues 4670-4684 the composition is skewed to pro residues; the sequence is PPTPPSSLPPTPPPS. S4789 bears the Phosphoserine mark. A Glycyl lysine isopeptide (Lys-Gly) (interchain with G-Cter in SUMO2) cross-link involves residue K4807. An N6-acetyllysine modification is found at K4827. Residues 4829–4874 form an RING-type 4; degenerate zinc finger; the sequence is KGSEVSVMLTVSAAAAKNLNGVMVAVAELLSMKIPNSYEVLFPDGP. The interval 4877 to 4908 is disordered; it reads AGLEPKKGEAEGPGGKEKGLSGKGPDTGPDWL. Over residues 4879 to 4896 the composition is skewed to basic and acidic residues; sequence LEPKKGEAEGPGGKEKGL. A Glycyl lysine isopeptide (Lys-Gly) (interchain with G-Cter in SUMO2) cross-link involves residue K4931. The segment at 4956–5031 is disordered; the sequence is QLSAPPPEEP…SEDSRPPRLK (76 aa). A compositionally biased stretch (pro residues) spans 4959–4982; the sequence is APPPEEPSPPPSPLAPSPASPPAE. A compositionally biased stretch (basic and acidic residues) spans 5017 to 5027; that stretch reads RPPEESEDSRP. The short motif at 5041–5045 is the LXXLL motif 6 element; it reads LRLLL. A C2HC pre-PHD-type 2 zinc finger spans residues 5080–5120; that stretch reads NRRCCFCHEEGDGATDGPARLLNLDLDLWVHLNCALWSTEV. The PHD-type 7 zinc finger occupies 5141-5188; sequence TKCSLCQRTGATSSCNRMRCPNVYHFACAIRAKCMFFKDKTMLCPVHK. The region spanning 5226 to 5286 is the FYR N-terminal domain; sequence LHMFRVGGLV…CCYRCSISEN (61 aa). In terms of domain architecture, FYR C-terminal spans 5287–5372; it reads NGRPEFVIKV…ESCQNYLFRY (86 aa). Positions 5388–5393 match the WDR5 interaction motif (WIN) motif; sequence GCARSE. One can recognise an SET domain in the interval 5448 to 5564; sequence NNVYLARSRI…KGEELTYDYQ (117 aa). Residues Y5502 and 5525–5526 contribute to the S-adenosyl-L-methionine site; that span reads NH. Residues C5528, C5576, C5578, and C5583 each coordinate Zn(2+). In terms of domain architecture, Post-SET spans 5572 to 5588; sequence HKIPCHCGAWNCRKWMN.

It belongs to the class V-like SAM-binding methyltransferase superfamily. Histone-lysine methyltransferase family. TRX/MLL subfamily. As to quaternary structure, component of the MLL2 complex (also named ASCOM complex), at least composed of catalytic subunit KMT2D/MLL2, ASH2L, RBBP5, WDR5, NCOA6, DPY30, KDM6A, PAXIP1/PTIP, PAGR1 and alpha- and beta-tubulin. Forms a core complex with the evolutionary conserved subcomplex WRAD composed of WDR5, RBBP5, ASH2L/ASH2 and DPY30 subunits; WRAD differentially stimulates the methyltransferase activity. Interacts with ESR1; interaction is direct. Interacts (via WIN motif) with WDR5.

It is found in the nucleus. It catalyses the reaction L-lysyl(4)-[histone H3] + S-adenosyl-L-methionine = N(6)-methyl-L-lysyl(4)-[histone H3] + S-adenosyl-L-homocysteine + H(+). Functionally, histone methyltransferase that catalyzes methyl group transfer from S-adenosyl-L-methionine to the epsilon-amino group of 'Lys-4' of histone H3 (H3K4). Part of chromatin remodeling machinery predominantly forms H3K4me1 methylation marks at active chromatin sites where transcription and DNA repair take place. Acts as a coactivator for estrogen receptor by being recruited by ESR1, thereby activating transcription. The sequence is that of Histone-lysine N-methyltransferase 2D (Kmt2d) from Mus musculus (Mouse).